The chain runs to 266 residues: Phosphatidylglycerol--prolipoprotein diacylglyceryl transferase (266 aa).

Helical transmembrane passes span V10–I30, L56–Y76, W92–F112, F120–I140, P171–F191, A199–V219, and W233–V253. R139 serves as a coordination point for a 1,2-diacyl-sn-glycero-3-phospho-(1'-sn-glycerol).

Belongs to the Lgt family.

The protein resides in the cell inner membrane. It catalyses the reaction L-cysteinyl-[prolipoprotein] + a 1,2-diacyl-sn-glycero-3-phospho-(1'-sn-glycerol) = an S-1,2-diacyl-sn-glyceryl-L-cysteinyl-[prolipoprotein] + sn-glycerol 1-phosphate + H(+). It functions in the pathway protein modification; lipoprotein biosynthesis (diacylglyceryl transfer). In terms of biological role, catalyzes the transfer of the diacylglyceryl group from phosphatidylglycerol to the sulfhydryl group of the N-terminal cysteine of a prolipoprotein, the first step in the formation of mature lipoproteins. This chain is Phosphatidylglycerol--prolipoprotein diacylglyceryl transferase, found in Pseudomonas paraeruginosa (strain DSM 24068 / PA7) (Pseudomonas aeruginosa (strain PA7)).